Reading from the N-terminus, the 323-residue chain is Oligodendrocyte transcription factor 2 (323 aa).

The segment covering 1–13 has biased composition (polar residues); the sequence is MDSDASLVSSRPS. Residues 1-107 are disordered; it reads MDSDASLVSS…KKQMTEPELQ (107 aa). The segment covering 77-93 has biased composition (low complexity); that stretch reads SSSSSTSSSTSSAATSS. In terms of domain architecture, bHLH spans 108–162; the sequence is QLRLKINSRERKRMHDLNIAMDGLREVMPYAHGPSVRKLSKIATLLLARNYILML.

Interacts with NKX2-2. Interacts with ZNF488. In terms of tissue distribution, expressed specifically in the brain.

Its subcellular location is the nucleus. It is found in the cytoplasm. Its function is as follows. Required for oligodendrocyte and motor neuron specification in the spinal cord, as well as for the development of somatic motor neurons in the hindbrain. Functions together with ZNF488 to promote oligodendrocyte differentiation. Cooperates with OLIG1 to establish the pMN domain of the embryonic neural tube. Antagonist of V2 interneuron and of NKX2-2-induced V3 interneuron development. This is Oligodendrocyte transcription factor 2 (Olig2) from Mus musculus (Mouse).